The following is a 387-amino-acid chain: Pepsin A (387 aa).

An N-terminal signal peptide occupies residues 1 to 15 (MKWLLLLSLVALSEC). Positions 16–61 (LYKVSLIKKKSLRKNLIEHGLLKDFLKNNTLDPASKYFPQGEAATM) are cleaved as a propeptide — activation peptide. The Peptidase A1 domain occupies 75 to 384 (YFGTIGIGTP…DRANNQVGLA (310 aa)). The active site involves D93. C106 and C111 are joined by a disulfide. S129 is modified (phosphoserine). C267 and C271 are disulfide-bonded. Residue D276 is part of the active site. A disulfide bridge links C310 with C343.

It belongs to the peptidase A1 family.

Its subcellular location is the secreted. It carries out the reaction Preferential cleavage: hydrophobic, preferably aromatic, residues in P1 and P1' positions. Cleaves 1-Phe-|-Val-2, 4-Gln-|-His-5, 13-Glu-|-Ala-14, 14-Ala-|-Leu-15, 15-Leu-|-Tyr-16, 16-Tyr-|-Leu-17, 23-Gly-|-Phe-24, 24-Phe-|-Phe-25 and 25-Phe-|-Tyr-26 bonds in the B chain of insulin.. Its activity is regulated as follows. Inhibited by pepstatin. Functionally, shows particularly broad specificity; although bonds involving phenylalanine and leucine are preferred, many others are also cleaved to some extent. This is Pepsin A (PGA) from Callithrix jacchus (White-tufted-ear marmoset).